The primary structure comprises 113 residues: Histone H2B (113 aa).

Residues Met1–Lys21 are disordered. A compositionally biased stretch (basic residues) spans Lys7–Lys21. Residue Lys109 forms a Glycyl lysine isopeptide (Lys-Gly) (interchain with G-Cter in ubiquitin) linkage.

Belongs to the histone H2B family. As to quaternary structure, the nucleosome is a histone octamer containing two molecules each of H2A, H2B, H3 and H4 assembled in one H3-H4 heterotetramer and two H2A-H2B heterodimers. The octamer wraps approximately 147 bp of DNA. In terms of processing, monoubiquitination of Lys-109 gives a specific tag for epigenetic transcriptional activation and is also prerequisite for histone H3 'Lys-4' and 'Lys-79' methylation.

It localises to the nucleus. The protein localises to the chromosome. In terms of biological role, core component of nucleosome. Nucleosomes wrap and compact DNA into chromatin, limiting DNA accessibility to the cellular machineries which require DNA as a template. Histones thereby play a central role in transcription regulation, DNA repair, DNA replication and chromosomal stability. DNA accessibility is regulated via a complex set of post-translational modifications of histones, also called histone code, and nucleosome remodeling. The sequence is that of Histone H2B (H2B1) from Euplotes crassus.